The sequence spans 253 residues: HTH-type transcriptional repressor DasR (253 aa).

The 71-residue stretch at 16–86 (RAQRVPKYYR…QGKGTFVAKP (71 aa)) folds into the HTH gntR-type domain. The H-T-H motif DNA-binding region spans 46-65 (ERTLAAEFDTSRTTVPQALQ).

It localises to the cytoplasm. In terms of biological role, global regulator that is part of the nutrient-sensing system. In the absence of glucosamine 6-P (GlcN6P), represses the phosphotransferase system (PTS) specific for the uptake of N-acetylglucosamine (PTSNag), and genes involved in the metabolism of chitin, as well as several genes involved in development, thereby linking carbon availability to morphogenesis. Regulates the dasABC transport operon involved in glucose-related morphogenesis. Essential for development. The sequence is that of HTH-type transcriptional repressor DasR (dasR) from Streptomyces griseus.